Here is a 173-residue protein sequence, read N- to C-terminus: MKHRDSIEDLYRQYYQEILNYLFRRTHHLETAKDLAQDTFVKALNGLASFRGHSSIRTWLYTIAHHTFINWYRRDVKYQFTEISKNEGLTQTTYDQPEQYLSRTVKSETLRQELLKLKDQHQSVLILREFQELSYEEIAEILGWSLSKVNTTLHRARLELKKNMTKSREEERI.

It belongs to the sigma-70 factor family. ECF subfamily.

In terms of biological role, sigma factors are initiation factors that promote the attachment of RNA polymerase to specific initiation sites and are then released. This sigma factor contributes to oxidative stress resistance. This is RNA polymerase sigma factor YlaC (ylaC) from Bacillus subtilis (strain 168).